The following is a 286-amino-acid chain: Probable aquaporin PIP2-5 (286 aa).

Methionine 1 carries the post-translational modification N-acetylmethionine. A compositionally biased stretch (basic and acidic residues) spans 1–18 (MTKEVVGDKRSFSGKDYQ). The segment at 1-23 (MTKEVVGDKRSFSGKDYQDPPPE) is disordered. Residues 1 to 38 (MTKEVVGDKRSFSGKDYQDPPPEPLFDATELGKWSFYR) are Cytoplasmic-facing. The residue at position 3 (lysine 3) is an N6,N6-dimethyllysine. The helical transmembrane segment at 39 to 59 (ALIAEFIATLLFLYVTIMTVI) threads the bilayer. The Extracellular segment spans residues 60-75 (GYKSQTDPALNPDQCT). The chain crosses the membrane as a helical span at residues 76 to 96 (GVGVLGIAWAFGGMIFILVYC). At 97–124 (TAGISGGHINPAVTFGLLLARKVTLVRA) the chain is on the cytoplasmic side. The NPA 1 signature appears at 106–108 (NPA). The chain crosses the membrane as a helical span at residues 125 to 145 (VMYMVAQCLGAICGVALVKAF). The Extracellular portion of the chain corresponds to 146–165 (QSAYFTRYGGGANGLSDGYS). Residues 166-186 (IGTGVAAEIIGTFVLVYTVFS) form a helical membrane-spanning segment. At 187–200 (ATDPKRSARDSHVP) the chain is on the cytoplasmic side. The chain crosses the membrane as a helical span at residues 201–221 (VLAPLPIGFAVFIVHLATIPI). At 222 to 248 (TGTGINPARSLGAAIIYNKDKAWDHHW) the chain is on the extracellular side. Positions 227-229 (NPA) match the NPA 2 motif. The helical transmembrane segment at 249-269 (IFWVGPFAGAAIAAFYHQFVL) threads the bilayer. Topologically, residues 270–286 (RAGAIKALGSFRSQPHV) are cytoplasmic. A phosphoserine mark is found at serine 279 and serine 282.

This sequence belongs to the MIP/aquaporin (TC 1.A.8) family. PIP (TC 1.A.8.11) subfamily. As to expression, expressed in green siliques.

The protein localises to the cell membrane. Functionally, aquaporins facilitate the transport of water and small neutral solutes across cell membranes. The polypeptide is Probable aquaporin PIP2-5 (PIP2-5) (Arabidopsis thaliana (Mouse-ear cress)).